The sequence spans 919 residues: Chitin synthase 1 (919 aa).

2 disordered regions span residues 1–69 and 109–134; these read MSYD…SFQT and NLAS…ALGP. Residues 11 to 30 are compositionally biased toward low complexity; the sequence is GQGRDYARQQRQQRSYQLSD. N-linked (GlcNAc...) asparagine glycans are attached at residues N187 and N556. A run of 7 helical transmembrane segments spans residues 594-614, 630-650, 668-688, 713-733, 742-762, 843-863, and 887-919; these read IVLL…SIII, LVVF…FLVL, IASF…SLWL, VLIA…ILYA, FPQY…YAFC, LVAF…NVNG, and IILW…FRKT.

Belongs to the chitin synthase family. Class III subfamily.

It is found in the cell membrane. Its subcellular location is the cytoplasmic vesicle membrane. The enzyme catalyses [(1-&gt;4)-N-acetyl-beta-D-glucosaminyl](n) + UDP-N-acetyl-alpha-D-glucosamine = [(1-&gt;4)-N-acetyl-beta-D-glucosaminyl](n+1) + UDP + H(+). Polymerizes chitin, a structural polymer of the cell wall and septum, by transferring the sugar moiety of UDP-GlcNAc to the non-reducing end of the growing chitin polymer. This chain is Chitin synthase 1, found in Mycosarcoma maydis (Corn smut fungus).